We begin with the raw amino-acid sequence, 204 residues long: Large ribosomal subunit protein uL4 (204 aa).

The span at 42–55 shows a compositional bias: polar residues; the sequence is GSRQGSKAQKNRSA. Positions 42 to 85 are disordered; it reads GSRQGSKAQKNRSAVSGGGKRPWAQKGTGRARAGTTRGPIWRSG. Positions 68–79 are enriched in low complexity; it reads GTGRARAGTTRG.

This sequence belongs to the universal ribosomal protein uL4 family. In terms of assembly, part of the 50S ribosomal subunit.

Functionally, one of the primary rRNA binding proteins, this protein initially binds near the 5'-end of the 23S rRNA. It is important during the early stages of 50S assembly. It makes multiple contacts with different domains of the 23S rRNA in the assembled 50S subunit and ribosome. Its function is as follows. Forms part of the polypeptide exit tunnel. The polypeptide is Large ribosomal subunit protein uL4 (Vesicomyosocius okutanii subsp. Calyptogena okutanii (strain HA)).